The following is a 240-amino-acid chain: Protein unc-119 homolog A (240 aa).

Residues 1-12 (MKVKKGGGGAGT) are compositionally biased toward gly residues. Residues 1-61 (MKVKKGGGGA…GPLQRKQRIG (61 aa)) form a disordered region. Residues 13–23 (GAEPASGAPGP) show a composition bias toward low complexity. A phosphoserine; by CK2 mark is found at Ser-37, Ser-39, and Ser-41. Tyr-131 is a tetradecanoate binding site.

The protein belongs to the PDE6D/unc-119 family. As to quaternary structure, interacts with CABP4; in the absence of calcium. May interact with GTP-bound ARL1. Interacts with ARL2 and ARL3 (GTP-bound forms); this promotes the release of myristoylated cargo proteins. Found in a complex with ARL3, RP2 and UNC119; RP2 induces hydrolysis of GTP ARL3 in the complex, leading to the release of UNC119. Interacts with NPHP3 (when myristoylated). Interacts with CYS1 (when myristoylated). Interacts with MACIR; interaction only takes place when UNC119 is not liganded with myristoylated proteins. Interacts with LCK; this interaction plays a crucial role in activation of LCK. Interacts with FYN. Interacts with RAB11A; in a cell cycle-dependent manner. Interacts with LYN (via SH2 and SH3 domains); leading to LYN activation. Interacts with DNM1; leading to a decrease of DNM1 GTPase activity. Found in a complex with ABL1, ABL2, CRK and UNC119; leading to the inhibition of CRK phosphorylation by ABL kinases. Interacts with CD44. Interacts with KLHL18 (via kelch repeats). Interacts with PPP3CA, PPP3CB and PPP3CC. Interacts with USP48; this interaction promotes UNC119 stability. Phosphorylation suppresses its interaction with KLHL18 and down-regulates its KLHL18-mediated degradation. Phosphorylated more under light conditions than dark conditions. Dephosphorylated by calcineurin.

It localises to the cytoplasm. The protein resides in the cytoskeleton. The protein localises to the microtubule organizing center. It is found in the centrosome. Its subcellular location is the spindle. It localises to the spindle pole. Its function is as follows. Involved in synaptic functions in photoreceptor cells, the signal transduction in immune cells as a Src family kinase activator, endosome recycling, the uptake of bacteria and endocytosis, protein trafficking in sensory neurons and as lipid-binding chaperone with specificity for a diverse subset of myristoylated proteins. Specifically binds the myristoyl moiety of a subset of N-terminally myristoylated proteins and is required for their localization. Binds myristoylated GNAT1 and is required for G-protein localization and trafficking in sensory neurons. Probably plays a role in trafficking proteins in photoreceptor cells. Plays important roles in mediating Src family kinase signals for the completion of cytokinesis via RAB11A. This is Protein unc-119 homolog A (UNC119) from Canis lupus familiaris (Dog).